Reading from the N-terminus, the 453-residue chain is Na(+)/H(+) antiporter NhaA 2 (453 aa).

Helical transmembrane passes span 32–52 (GALL…PGAA), 71–91 (LSLA…VAGL), 109–129 (AVPI…YVLI), 140–160 (GWAI…AVIG), 169–189 (VFLL…IAVF), 193–213 (NLSV…AILL), 232–252 (ALVH…ALVV), 284–304 (AVPV…GGLV), 310–330 (PVAI…VIAV), 356–376 (MLAG…FAAG), and 382–402 (HVKI…AVIL). The interval 409 to 453 (GSRGNDATTRDPDQTRVGTATQRTTPDHPTPAATDANQPARSPAP) is disordered.

This sequence belongs to the NhaA Na(+)/H(+) (TC 2.A.33) antiporter family.

It localises to the cell membrane. It carries out the reaction Na(+)(in) + 2 H(+)(out) = Na(+)(out) + 2 H(+)(in). Na(+)/H(+) antiporter that extrudes sodium in exchange for external protons. The chain is Na(+)/H(+) antiporter NhaA 2 from Salinispora tropica (strain ATCC BAA-916 / DSM 44818 / JCM 13857 / NBRC 105044 / CNB-440).